Consider the following 258-residue polypeptide: ProSAAS (258 aa).

The N-terminal stretch at 1 to 33 (MAGSPLLCGPRAGGVGILVLLLLGLLRLPPTLS) is a signal peptide. Positions 34–213 (ARPVKEPRSL…SSEPEAAPAP (180 aa)) are proSAAS(1-180). 3 disordered regions span residues 156–188 (PAPA…TPDV), 204–230 (SSEP…EVPP), and 239–258 (RVKR…LLPP). Positions 177-188 (DVEDAGDETPDV) are enriched in acidic residues. A compositionally biased stretch (low complexity) spans 204-213 (SSEPEAAPAP). The segment at 219–258 (SVDQDLGPEVPPENVLGALLRVKRLENPSPQAPARRLLPP) is C-terminal inhibitory domain; interacts with PCSK1. The Sufficient for inhibition of PCSK1 signature appears at 237–242 (LLRVKR).

In terms of assembly, interacts via the C-terminal inhibitory domain with PCSK1 66 kDa form. Post-translationally, proteolytically cleaved in the Golgi. Little SAAS, PEN, PEN-20 and Big LEN are the major processed peptides in proSAAS-overexpressing AtT-20 pituitary corticotropic cell line. In terms of tissue distribution, expressed in brain (mostly hypothalamus and pituitary) and gut. Expressed in trigeminal ganglia and neuroendocrine cell lines. Expressed in pancreas, spinal cord and brain (most abundant in striatum, hippocampus, pons and medulla, and cortex) (at protein level).

The protein localises to the secreted. Its subcellular location is the golgi apparatus. The protein resides in the trans-Golgi network. May function in the control of the neuroendocrine secretory pathway. Proposed be a specific endogenous inhibitor of PCSK1. ProSAAS and Big PEN-LEN, both containing the C-terminal inhibitory domain, but not the processed peptides reduce PCSK1 activity in the endoplasmic reticulum and Golgi. It reduces the activity of the 87 kDa form but not the autocatalytically derived 66 kDa form of PCSK1. Subsequent processing of proSAAS may eliminate the inhibition. Slows down convertase-mediated processing of proopiomelanocortin and proenkephalin. May control the intracellular timing of PCSK1 rather than its total level of activity. In terms of biological role, endogenous ligand for GPR171. Neuropeptide involved in the regulation of feeding. Its function is as follows. Endogenous ligand for GPR171. Neuropeptide involved in the regulation of feeding. This is ProSAAS (Pcsk1n) from Mus musculus (Mouse).